A 147-amino-acid polypeptide reads, in one-letter code: Hemoglobin subunit deltaH (147 aa).

The Globin domain maps to 3-147 (RLTDSEKAEV…MANALAHKYH (145 aa)). Residues His-64 and His-93 each coordinate heme b.

This sequence belongs to the globin family. In terms of assembly, heterotetramer of two delta chains and two alpha chains. As to expression, red blood cells.

The polypeptide is Hemoglobin subunit deltaH (HBD) (Dendrohyrax dorsalis (Beecroft's tree hyrax)).